Consider the following 88-residue polypeptide: Small ribosomal subunit protein bS20 (88 aa).

A disordered region spans residues 1 to 26 (MANTAQARKRARQNTKRRQNSASQRS). Positions 7–19 (ARKRARQNTKRRQ) are enriched in basic residues.

This sequence belongs to the bacterial ribosomal protein bS20 family.

Its function is as follows. Binds directly to 16S ribosomal RNA. The polypeptide is Small ribosomal subunit protein bS20 (Psychrobacter cryohalolentis (strain ATCC BAA-1226 / DSM 17306 / VKM B-2378 / K5)).